The chain runs to 132 residues: Gamma-crystallin-5 (132 aa).

Positions 1-40 (ILYEQPSYRGHQYYLWKGEYPDFQRWMGFNDSIRSCRMSP) constitute a Beta/gamma crystallin 'Greek key' 2 domain. The segment at 41-45 (YHQGQ) is connecting peptide. 2 Beta/gamma crystallin 'Greek key' domains span residues 46–86 (YKMR…NVFD) and 87–129 (GNWM…RRVH).

This sequence belongs to the beta/gamma-crystallin family. Monomer.

In terms of biological role, crystallins are the dominant structural components of the vertebrate eye lens. This chain is Gamma-crystallin-5 (cryg5), found in Xenopus laevis (African clawed frog).